A 572-amino-acid chain; its full sequence is Excitatory amino acid transporter 2 (572 aa).

The segment covering 1–11 has biased composition (polar residues); it reads MASTEGANNMP. A disordered region spans residues 1–28; that stretch reads MASTEGANNMPKQVEVRMHDSHLSSDEP. At 1 to 44 the chain is on the cytoplasmic side; sequence MASTEGANNMPKQVEVRMHDSHLSSDEPKHRNLGMRMCDKLGKN. A phosphoserine mark is found at serine 3, serine 21, serine 24, and serine 25. The segment covering 14 to 28 has biased composition (basic and acidic residues); sequence VEVRMHDSHLSSDEP. A lipid anchor (S-palmitoyl cysteine) is attached at cysteine 38. The next 3 membrane-spanning stretches (helical) occupy residues 45-64, 88-108, and 121-142; these read LLLS…GGLL, MLKM…LSGL, and MVYY…VLAI. N-linked (GlcNAc...) asparagine glycosylation is found at asparagine 205 and asparagine 215. A run of 3 helical transmembrane segments spans residues 235-258, 268-295, and 317-338; these read FKDG…MGKM, FFNI…ACLI, and ITVI…YFVV. Positions 344 to 374 form an intramembrane region, discontinuously helical; it reads FSFFAGIFQAWITALGTASSAGTLPVTFRCL. Position 361–363 (361–363) interacts with L-aspartate; sequence ASS. The chain crosses the membrane as a helical span at residues 384-410; sequence VTRFVLPVGATINMDGTALYEAVAAIF. Residues glycine 392, threonine 394, and asparagine 396 each contribute to the Na(+) site. Residues threonine 400, 441 to 445, aspartate 474, and asparagine 481 each bind L-aspartate; that span reads IPSAG. The discontinuously helical intramembrane region spans 424-457; it reads IVTVSLTATLASIGAASIPSAGLVTMLLILTAVG. The helical transmembrane segment at 471-492 threads the bilayer; it reads WLLDRMRTSVNVVGDSFGAGIV. 2 residues coordinate Na(+): asparagine 481 and aspartate 485. Serine 505, serine 520, serine 530, and serine 532 each carry phosphoserine. Tyrosine 537 carries the phosphotyrosine modification. A phosphoserine mark is found at serine 542, serine 558, and serine 562.

It belongs to the dicarboxylate/amino acid:cation symporter (DAACS) (TC 2.A.23) family. SLC1A2 subfamily. Homotrimer. Interacts with AJUBA. In terms of processing, glycosylated. Palmitoylation at Cys-38 is not required for correct subcellular localization, but is important for glutamate uptake activity. As to expression, detected in brain. Detected in embryonic forebrain, especially in globus pallidus, perirhinal cortex, lateral hypothalamus, hippocampus, and on fimbria and axonal pathways connecting the neocortex, basal ganglia and thalamus (at protein level). Isoform GLT1 is expressed in the brain. Isoforms GLT-1A and GLT-1B are expressed in the liver.

The protein resides in the cell membrane. The catalysed reaction is K(+)(in) + L-glutamate(out) + 3 Na(+)(out) + H(+)(out) = K(+)(out) + L-glutamate(in) + 3 Na(+)(in) + H(+)(in). The enzyme catalyses K(+)(in) + L-aspartate(out) + 3 Na(+)(out) + H(+)(out) = K(+)(out) + L-aspartate(in) + 3 Na(+)(in) + H(+)(in). It catalyses the reaction D-aspartate(out) + K(+)(in) + 3 Na(+)(out) + H(+)(out) = D-aspartate(in) + K(+)(out) + 3 Na(+)(in) + H(+)(in). Sodium-dependent, high-affinity amino acid transporter that mediates the uptake of L-glutamate and also L-aspartate and D-aspartate. Functions as a symporter that transports one amino acid molecule together with two or three Na(+) ions and one proton, in parallel with the counter-transport of one K(+) ion. Mediates Cl(-) flux that is not coupled to amino acid transport; this avoids the accumulation of negative charges due to aspartate and Na(+) symport. Essential for the rapid removal of released glutamate from the synaptic cleft, and for terminating the postsynaptic action of glutamate. The sequence is that of Excitatory amino acid transporter 2 (Slc1a2) from Mus musculus (Mouse).